Consider the following 37-residue polypeptide: Esculentin-2JDa (37 aa).

C31 and C37 are oxidised to a cystine.

As to expression, expressed by the skin glands.

Its subcellular location is the secreted. In terms of biological role, has antibacterial activity against E.coli and S.aureus strains. The polypeptide is Esculentin-2JDa (Odorrana jingdongensis (Jingdong frog)).